The following is a 92-amino-acid chain: Small ribosomal subunit protein uS19c (92 aa).

It belongs to the universal ribosomal protein uS19 family.

It is found in the plastid. The protein localises to the chloroplast. Protein S19 forms a complex with S13 that binds strongly to the 16S ribosomal RNA. This Chara vulgaris (Common stonewort) protein is Small ribosomal subunit protein uS19c.